The primary structure comprises 102 residues: Large ribosomal subunit protein uL23 (102 aa).

Belongs to the universal ribosomal protein uL23 family. As to quaternary structure, part of the 50S ribosomal subunit. Contacts protein L29, and trigger factor when it is bound to the ribosome.

One of the early assembly proteins it binds 23S rRNA. One of the proteins that surrounds the polypeptide exit tunnel on the outside of the ribosome. Forms the main docking site for trigger factor binding to the ribosome. The protein is Large ribosomal subunit protein uL23 of Paramagnetospirillum magneticum (strain ATCC 700264 / AMB-1) (Magnetospirillum magneticum).